The following is a 140-amino-acid chain: Organic hydroperoxide resistance protein-like 1 (140 aa).

The protein belongs to the OsmC/Ohr family.

This is Organic hydroperoxide resistance protein-like 1 from Staphylococcus epidermidis (strain ATCC 35984 / DSM 28319 / BCRC 17069 / CCUG 31568 / BM 3577 / RP62A).